Here is a 569-residue protein sequence, read N- to C-terminus: Urease subunit alpha (569 aa).

The region spanning 131-569 (GSIDTHIHFI…VPMAQRYFLL (439 aa)) is the Urease domain. Ni(2+)-binding residues include H136, H138, and K219. K219 carries the post-translational modification N6-carboxylysine. H221 is a substrate binding site. H248 and H274 together coordinate Ni(2+). Residue H322 is the Proton donor of the active site. D362 provides a ligand contact to Ni(2+).

It belongs to the metallo-dependent hydrolases superfamily. Urease alpha subunit family. Heterotrimer of UreA (gamma), UreB (beta) and UreC (alpha) subunits. Three heterotrimers associate to form the active enzyme. Requires Ni cation as cofactor. Carboxylation allows a single lysine to coordinate two nickel ions.

The protein resides in the cytoplasm. It catalyses the reaction urea + 2 H2O + H(+) = hydrogencarbonate + 2 NH4(+). The protein operates within nitrogen metabolism; urea degradation; CO(2) and NH(3) from urea (urease route): step 1/1. In Prochlorococcus marinus (strain AS9601), this protein is Urease subunit alpha.